The chain runs to 77 residues: Cell division topological specificity factor (77 aa).

The protein belongs to the MinE family.

Prevents the cell division inhibition by proteins MinC and MinD at internal division sites while permitting inhibition at polar sites. This ensures cell division at the proper site by restricting the formation of a division septum at the midpoint of the long axis of the cell. This Helicobacter pylori (strain P12) protein is Cell division topological specificity factor.